The chain runs to 132 residues: Small ribosomal subunit protein uS8 (132 aa).

It belongs to the universal ribosomal protein uS8 family. In terms of assembly, part of the 30S ribosomal subunit. Contacts proteins S5 and S12.

Its function is as follows. One of the primary rRNA binding proteins, it binds directly to 16S rRNA central domain where it helps coordinate assembly of the platform of the 30S subunit. This Desulforamulus reducens (strain ATCC BAA-1160 / DSM 100696 / MI-1) (Desulfotomaculum reducens) protein is Small ribosomal subunit protein uS8.